The chain runs to 47 residues: Conotoxin reg3.11 (47 aa).

Residues 1–31 constitute a propeptide that is removed on maturation; sequence DQPVERHAENKRHLIPAVMRAMTMNADRRVQ. 3 disulfide bridges follow: Cys32-Cys44, Cys33-Cys42, and Cys38-Cys45. Residues 46–47 constitute a propeptide that is removed on maturation; the sequence is YH.

It belongs to the conotoxin M superfamily. As to expression, expressed by the venom duct.

The protein localises to the secreted. The chain is Conotoxin reg3.11 from Conus regius (Crown cone).